We begin with the raw amino-acid sequence, 105 residues long: Large ribosomal subunit protein uL24 (105 aa).

It belongs to the universal ribosomal protein uL24 family. In terms of assembly, part of the 50S ribosomal subunit.

In terms of biological role, one of two assembly initiator proteins, it binds directly to the 5'-end of the 23S rRNA, where it nucleates assembly of the 50S subunit. One of the proteins that surrounds the polypeptide exit tunnel on the outside of the subunit. In Aeromonas hydrophila subsp. hydrophila (strain ATCC 7966 / DSM 30187 / BCRC 13018 / CCUG 14551 / JCM 1027 / KCTC 2358 / NCIMB 9240 / NCTC 8049), this protein is Large ribosomal subunit protein uL24.